A 235-amino-acid polypeptide reads, in one-letter code: Transmembrane protein 176A (235 aa).

A Phosphoserine modification is found at serine 38. The next 4 membrane-spanning stretches (helical) occupy residues 55–75 (VASW…GGFF), 86–106 (SGAA…AFIY), 113–133 (YWAL…IAAL), and 193–213 (AMLL…LWLY).

The protein belongs to the TMEM176 family. In terms of assembly, interacts with MCOLN2.

It is found in the membrane. The chain is Transmembrane protein 176A (TMEM176A) from Homo sapiens (Human).